Reading from the N-terminus, the 291-residue chain is uncharacterized protein (291 aa).

In terms of domain architecture, DAGKc spans 68–205 (PVAVSASFLW…VIQLWARPRG (138 aa)).

This is an uncharacterized protein from Mycobacterium tuberculosis (strain CDC 1551 / Oshkosh).